The primary structure comprises 148 residues: Large ribosomal subunit protein uL11 (148 aa).

The disordered stretch occupies residues 89 to 108 (EKKKGSGAHKPGKEKVGQVT).

Belongs to the universal ribosomal protein uL11 family. Part of the ribosomal stalk of the 50S ribosomal subunit. Interacts with L10 and the large rRNA to form the base of the stalk. L10 forms an elongated spine to which L12 dimers bind in a sequential fashion forming a multimeric L10(L12)X complex. One or more lysine residues are methylated.

Forms part of the ribosomal stalk which helps the ribosome interact with GTP-bound translation factors. In Anaeromyxobacter sp. (strain Fw109-5), this protein is Large ribosomal subunit protein uL11.